The following is an 896-amino-acid chain: Alanine--tRNA ligase (896 aa).

Basic and acidic residues predominate over residues glutamine 439–serine 456. A disordered region spans residues glutamine 439–arginine 459. Residues histidine 579, histidine 583, cysteine 681, and histidine 685 each coordinate Zn(2+).

Belongs to the class-II aminoacyl-tRNA synthetase family. It depends on Zn(2+) as a cofactor.

Its subcellular location is the cytoplasm. It carries out the reaction tRNA(Ala) + L-alanine + ATP = L-alanyl-tRNA(Ala) + AMP + diphosphate. In terms of biological role, catalyzes the attachment of alanine to tRNA(Ala) in a two-step reaction: alanine is first activated by ATP to form Ala-AMP and then transferred to the acceptor end of tRNA(Ala). Also edits incorrectly charged Ser-tRNA(Ala) and Gly-tRNA(Ala) via its editing domain. The chain is Alanine--tRNA ligase from Nocardioides sp. (strain ATCC BAA-499 / JS614).